Here is a 255-residue protein sequence, read N- to C-terminus: Cyclase-like protein 1 (255 aa).

A signal peptide spans 1–24 (MTRSVSFPLFLFAVVLSLSSSLLA).

The protein belongs to the Cyclase 1 superfamily.

The protein resides in the secreted. It is found in the extracellular space. Its subcellular location is the extracellular matrix. Functionally, acts as a negative regulator of fumonisin B1- and pathogen-induced programmed cell death (PCD), and regulates pathogen-induced symptom development. May function redundantly with CYCLASE2 for normal plant growth, development and viability. This is Cyclase-like protein 1 from Arabidopsis thaliana (Mouse-ear cress).